Here is a 380-residue protein sequence, read N- to C-terminus: 1-deoxy-D-xylulose 5-phosphate reductoisomerase (380 aa).

Residues Thr10, Gly11, Ser12, Ile13, Gly35, and Asn121 each contribute to the NADPH site. Residue Lys122 participates in 1-deoxy-D-xylulose 5-phosphate binding. Glu123 contributes to the NADPH binding site. Mn(2+) is bound at residue Asp147. 1-deoxy-D-xylulose 5-phosphate contacts are provided by Ser148, Glu149, Ser173, and His196. Glu149 contributes to the Mn(2+) binding site. Gly202 contributes to the NADPH binding site. 1-deoxy-D-xylulose 5-phosphate contacts are provided by Ser209, Asn214, Lys215, and Glu218. Glu218 serves as a coordination point for Mn(2+).

It belongs to the DXR family. Mg(2+) is required as a cofactor. The cofactor is Mn(2+).

The enzyme catalyses 2-C-methyl-D-erythritol 4-phosphate + NADP(+) = 1-deoxy-D-xylulose 5-phosphate + NADPH + H(+). Its pathway is isoprenoid biosynthesis; isopentenyl diphosphate biosynthesis via DXP pathway; isopentenyl diphosphate from 1-deoxy-D-xylulose 5-phosphate: step 1/6. Functionally, catalyzes the NADPH-dependent rearrangement and reduction of 1-deoxy-D-xylulose-5-phosphate (DXP) to 2-C-methyl-D-erythritol 4-phosphate (MEP). This chain is 1-deoxy-D-xylulose 5-phosphate reductoisomerase, found in Lachnospira eligens (strain ATCC 27750 / DSM 3376 / VPI C15-48 / C15-B4) (Eubacterium eligens).